The primary structure comprises 650 residues: Acetyl-coenzyme A synthetase (650 aa).

Residues 191–194, Thr-311, and Asn-335 contribute to the CoA site; that span reads RAGR. Residues 387–389, 411–416, Asp-500, and Arg-515 contribute to the ATP site; these read GEP and DTWWQT. Ser-523 lines the CoA pocket. Arg-526 contacts ATP. 3 residues coordinate Mg(2+): Val-537, His-539, and Val-542. Arg-584 contributes to the CoA binding site. An N6-acetyllysine modification is found at Lys-609.

It belongs to the ATP-dependent AMP-binding enzyme family. Mg(2+) is required as a cofactor. Post-translationally, acetylated. Deacetylation by the SIR2-homolog deacetylase activates the enzyme.

It catalyses the reaction acetate + ATP + CoA = acetyl-CoA + AMP + diphosphate. Catalyzes the conversion of acetate into acetyl-CoA (AcCoA), an essential intermediate at the junction of anabolic and catabolic pathways. AcsA undergoes a two-step reaction. In the first half reaction, AcsA combines acetate with ATP to form acetyl-adenylate (AcAMP) intermediate. In the second half reaction, it can then transfer the acetyl group from AcAMP to the sulfhydryl group of CoA, forming the product AcCoA. This is Acetyl-coenzyme A synthetase from Shewanella pealeana (strain ATCC 700345 / ANG-SQ1).